The sequence spans 205 residues: Urease accessory protein UreG (205 aa).

14–21 (GPVGSGKT) serves as a coordination point for GTP.

This sequence belongs to the SIMIBI class G3E GTPase family. UreG subfamily. As to quaternary structure, homodimer. UreD, UreF and UreG form a complex that acts as a GTP-hydrolysis-dependent molecular chaperone, activating the urease apoprotein by helping to assemble the nickel containing metallocenter of UreC. The UreE protein probably delivers the nickel.

It localises to the cytoplasm. Its function is as follows. Facilitates the functional incorporation of the urease nickel metallocenter. This process requires GTP hydrolysis, probably effectuated by UreG. The chain is Urease accessory protein UreG from Escherichia coli.